Consider the following 29-residue polypeptide: Cyclotide mech-3 (29 aa).

Positions 1–29 form a cross-link, cyclopeptide (Gly-Asn); sequence GLPTCGETCTLGKCNTPKCTCNWPICYKN. Intrachain disulfides connect C5–C19, C9–C21, and C14–C26.

Post-translationally, this is a cyclic peptide. In terms of processing, contains 3 disulfide bonds.

In terms of biological role, probably participates in a plant defense mechanism (Potential). Binds to and induces leakage in phospholipd membranes, particularly ones containing 1-palmitoyl-2-oleophosphatidylethanolamine (POPE). In vitro, displays cytotoxicity against cultured cells but no hemolytic activity towards fresh erythrocytes. This chain is Cyclotide mech-3, found in Melicytus chathamicus (Chatham Island mahoe).